The sequence spans 181 residues: Large ribosomal subunit protein uL6 (181 aa).

It belongs to the universal ribosomal protein uL6 family. As to quaternary structure, part of the 50S ribosomal subunit.

In terms of biological role, this protein binds to the 23S rRNA, and is important in its secondary structure. It is located near the subunit interface in the base of the L7/L12 stalk, and near the tRNA binding site of the peptidyltransferase center. This is Large ribosomal subunit protein uL6 from Phytoplasma mali (strain AT).